We begin with the raw amino-acid sequence, 495 residues long: Probable cytosol aminopeptidase (495 aa).

Mn(2+) is bound by residues lysine 261 and aspartate 266. Residue lysine 273 is part of the active site. Aspartate 284, aspartate 343, and glutamate 345 together coordinate Mn(2+). Arginine 347 is an active-site residue.

This sequence belongs to the peptidase M17 family. Mn(2+) serves as cofactor.

Its subcellular location is the cytoplasm. The enzyme catalyses Release of an N-terminal amino acid, Xaa-|-Yaa-, in which Xaa is preferably Leu, but may be other amino acids including Pro although not Arg or Lys, and Yaa may be Pro. Amino acid amides and methyl esters are also readily hydrolyzed, but rates on arylamides are exceedingly low.. It carries out the reaction Release of an N-terminal amino acid, preferentially leucine, but not glutamic or aspartic acids.. Functionally, presumably involved in the processing and regular turnover of intracellular proteins. Catalyzes the removal of unsubstituted N-terminal amino acids from various peptides. The chain is Probable cytosol aminopeptidase from Chelativorans sp. (strain BNC1).